A 420-amino-acid chain; its full sequence is 3-phosphoshikimate 1-carboxyvinyltransferase (420 aa).

Residues lysine 20, serine 21, and arginine 25 each coordinate 3-phosphoshikimate. Position 20 (lysine 20) interacts with phosphoenolpyruvate. Arginine 119 contacts phosphoenolpyruvate. Residues serine 161, serine 162, glutamine 163, serine 189, aspartate 303, glutamine 326, and lysine 330 each contribute to the 3-phosphoshikimate site. Residue glutamine 163 coordinates phosphoenolpyruvate. Aspartate 303 acts as the Proton acceptor in catalysis. Phosphoenolpyruvate contacts are provided by arginine 334, arginine 375, and lysine 400.

Belongs to the EPSP synthase family. As to quaternary structure, monomer.

The protein localises to the cytoplasm. The catalysed reaction is 3-phosphoshikimate + phosphoenolpyruvate = 5-O-(1-carboxyvinyl)-3-phosphoshikimate + phosphate. The protein operates within metabolic intermediate biosynthesis; chorismate biosynthesis; chorismate from D-erythrose 4-phosphate and phosphoenolpyruvate: step 6/7. In terms of biological role, catalyzes the transfer of the enolpyruvyl moiety of phosphoenolpyruvate (PEP) to the 5-hydroxyl of shikimate-3-phosphate (S3P) to produce enolpyruvyl shikimate-3-phosphate and inorganic phosphate. The sequence is that of 3-phosphoshikimate 1-carboxyvinyltransferase from Dehalococcoides mccartyi (strain ATCC BAA-2100 / JCM 16839 / KCTC 5957 / BAV1).